A 440-amino-acid polypeptide reads, in one-letter code: Methylenetetrahydrofolate--tRNA-(uracil-5-)-methyltransferase TrmFO (440 aa).

14–19 serves as a coordination point for FAD; the sequence is GAGLAG.

Belongs to the MnmG family. TrmFO subfamily. The cofactor is FAD.

The protein resides in the cytoplasm. The catalysed reaction is uridine(54) in tRNA + (6R)-5,10-methylene-5,6,7,8-tetrahydrofolate + NADH + H(+) = 5-methyluridine(54) in tRNA + (6S)-5,6,7,8-tetrahydrofolate + NAD(+). It carries out the reaction uridine(54) in tRNA + (6R)-5,10-methylene-5,6,7,8-tetrahydrofolate + NADPH + H(+) = 5-methyluridine(54) in tRNA + (6S)-5,6,7,8-tetrahydrofolate + NADP(+). Functionally, catalyzes the folate-dependent formation of 5-methyl-uridine at position 54 (M-5-U54) in all tRNAs. The sequence is that of Methylenetetrahydrofolate--tRNA-(uracil-5-)-methyltransferase TrmFO from Bdellovibrio bacteriovorus (strain ATCC 15356 / DSM 50701 / NCIMB 9529 / HD100).